The primary structure comprises 306 residues: Phosphatidate cytidylyltransferase (306 aa).

The tract at residues 1–28 (MTTNDAGTGNPAEQPARGAKQQPATETS) is disordered. 8 helical membrane passes run 36–56 (AAIV…VFVP), 82–102 (GYLI…WLTW), 103–123 (PFGA…CMIW), 151–171 (ATVF…MLVY), 180–200 (FCMM…GVLF), 218–238 (FAGS…FLVG), 241–261 (PWIG…GDLV), and 285–305 (MDRL…LTLL).

It belongs to the CDS family.

The protein resides in the cell membrane. The enzyme catalyses a 1,2-diacyl-sn-glycero-3-phosphate + CTP + H(+) = a CDP-1,2-diacyl-sn-glycerol + diphosphate. The protein operates within phospholipid metabolism; CDP-diacylglycerol biosynthesis; CDP-diacylglycerol from sn-glycerol 3-phosphate: step 3/3. The protein is Phosphatidate cytidylyltransferase (cdsA) of Mycobacterium bovis (strain ATCC BAA-935 / AF2122/97).